The primary structure comprises 501 residues: Ribose import ATP-binding protein RbsA (501 aa).

2 ABC transporter domains span residues 5-241 (LSLE…VGRK) and 252-498 (LRND…TGGV). Residue 37 to 44 (GENGAGKS) participates in ATP binding.

The protein belongs to the ABC transporter superfamily. Ribose importer (TC 3.A.1.2.1) family. In terms of assembly, the complex is composed of an ATP-binding protein (RbsA), two transmembrane proteins (RbsC) and a solute-binding protein (RbsB).

The protein localises to the cell inner membrane. The catalysed reaction is D-ribose(out) + ATP + H2O = D-ribose(in) + ADP + phosphate + H(+). In terms of biological role, part of the ABC transporter complex RbsABC involved in ribose import. Responsible for energy coupling to the transport system. This is Ribose import ATP-binding protein RbsA from Hahella chejuensis (strain KCTC 2396).